Reading from the N-terminus, the 160-residue chain is Cytochrome b6-f complex subunit 4 (160 aa).

Helical transmembrane passes span 36–56, 95–115, and 131–151; these read LLYM…SLAV, LLGV…PFIE, and TLFL…ALPI.

It belongs to the cytochrome b family. PetD subfamily. As to quaternary structure, the 4 large subunits of the cytochrome b6-f complex are cytochrome b6, subunit IV (17 kDa polypeptide, petD), cytochrome f and the Rieske protein, while the 4 small subunits are petG, petL, petM and petN. The complex functions as a dimer.

It localises to the plastid. The protein localises to the chloroplast thylakoid membrane. Its function is as follows. Component of the cytochrome b6-f complex, which mediates electron transfer between photosystem II (PSII) and photosystem I (PSI), cyclic electron flow around PSI, and state transitions. The sequence is that of Cytochrome b6-f complex subunit 4 from Oltmannsiellopsis viridis (Marine flagellate).